We begin with the raw amino-acid sequence, 301 residues long: MTTQLTHLQQLEAESIHIIREVVAEFDNPVMLYSIGKDSAVMLHLARKAFYPAPPPFPLLHVDTTWKFREMIQFRGRMAKESGMELLVHVNEDGVKRGVSPFTHGSALYTDVMKTEGLKQALDHYKFDAAFGGARRDEEKSRAKERIFSFRSANHRWDPKNQRPELWSLYNTRIKPGESIRVFPLSNWTELDIWQYIHLEQIPIVPLYYAAVRPVVERDGMLIMVDDDRLELKPGEKVEQKSVRFRTLGCYPLTGAVESEADTLPEIIQEMLLTRTSERQGRLIDHDQAGSMEKKKQEGYF.

The protein belongs to the PAPS reductase family. CysD subfamily. As to quaternary structure, heterodimer composed of CysD, the smaller subunit, and CysN.

It catalyses the reaction sulfate + ATP + H(+) = adenosine 5'-phosphosulfate + diphosphate. It functions in the pathway sulfur metabolism; hydrogen sulfide biosynthesis; sulfite from sulfate: step 1/3. With CysN forms the ATP sulfurylase (ATPS) that catalyzes the adenylation of sulfate producing adenosine 5'-phosphosulfate (APS) and diphosphate, the first enzymatic step in sulfur assimilation pathway. APS synthesis involves the formation of a high-energy phosphoric-sulfuric acid anhydride bond driven by GTP hydrolysis by CysN coupled to ATP hydrolysis by CysD. In Citrifermentans bemidjiense (strain ATCC BAA-1014 / DSM 16622 / JCM 12645 / Bem) (Geobacter bemidjiensis), this protein is Sulfate adenylyltransferase subunit 2.